Reading from the N-terminus, the 879-residue chain is Alanine--tRNA ligase (879 aa).

Zn(2+) contacts are provided by His-566, His-570, Cys-668, and His-672.

Belongs to the class-II aminoacyl-tRNA synthetase family. Requires Zn(2+) as cofactor.

The protein resides in the cytoplasm. The catalysed reaction is tRNA(Ala) + L-alanine + ATP = L-alanyl-tRNA(Ala) + AMP + diphosphate. In terms of biological role, catalyzes the attachment of alanine to tRNA(Ala) in a two-step reaction: alanine is first activated by ATP to form Ala-AMP and then transferred to the acceptor end of tRNA(Ala). Also edits incorrectly charged Ser-tRNA(Ala) and Gly-tRNA(Ala) via its editing domain. This Oceanobacillus iheyensis (strain DSM 14371 / CIP 107618 / JCM 11309 / KCTC 3954 / HTE831) protein is Alanine--tRNA ligase.